Here is a 648-residue protein sequence, read N- to C-terminus: Leucine-rich repeat transmembrane protein FLRT3 (648 aa).

A signal peptide spans 1 to 28 (MSTETWNLFVAWAQLLLLFRISPQYVNA). Residues 29–527 (KPCPSVCRCD…KEPYKNSSLP (499 aa)) lie on the Extracellular side of the membrane. The 33-residue stretch at 30–62 (PCPSVCRCDGGFIYCNDRDLTSIPSGIPDDATT) folds into the LRRNT domain. Disulfide bonds link Cys-31–Cys-37 and Cys-35–Cys-44. LRR repeat units lie at residues 58-82 (DDATTLYLQNNQINNAGIPSDLRGL), 83-105 (DKVERIYLYRNSLDEFPINLPKN), 107-126 (KELHLQENNIRTITYDALSQ), 127-152 (IPSIEELHLDDNSVSAVSIEDGAFRD), 154-179 (IFLRLLFLSRNHLSTIPWGLPRTIEE), 181-197 (RLDDNRISTIAEISLQD), 198-223 (LTNLKRLVLDGNLLNNNGLGERVFMN), 225-246 (INLTELSLVRNSLTSPPANLPG), 247-269 (TNLRKLYLQENHMNYVPPNAFAD), and 270-293 (LTQLYRLDMSNNNITALPQGIFDD). Asn-226 is a glycosylation site (N-linked (GlcNAc...) asparagine). Residues 305–356 (NPWYCGCKMKWVRDWLQSLPSKVNVRGLMCQAPERVRGMTIKDLNKELFDCK) enclose the LRRCT domain. A disulfide bridge links Cys-309 with Cys-334. The 95-residue stretch at 409 to 503 (KIITIQVKSI…VCIETETAPL (95 aa)) folds into the Fibronectin type-III domain. Residues 528–548 (LAAIIGGAVALVAITLLALVC) traverse the membrane as a helical segment. Residues 549–648 (WYVHRNGSLF…GIPDSDHSHS (100 aa)) are Cytoplasmic-facing. Positions 624–633 (NSHSESSSNR) are enriched in low complexity. A disordered region spans residues 624–648 (NSHSESSSNRSYRDSGIPDSDHSHS).

Interacts with fgfr1 and fgfr4. Interacts with rnd1, cdh1 and pcdh8. Interacts (via extracellular domain) with unc5b and unc5d (via extracellular domain). Post-translationally, N-glycosylated. Proteolytic cleavage in the juxtamembrane region gives rise to a soluble ectodomain. Cleavage is probably effected by a metalloprotease.

The protein localises to the cell membrane. The protein resides in the endoplasmic reticulum membrane. It is found in the cell junction. It localises to the focal adhesion. Its subcellular location is the secreted. The protein localises to the cell projection. The protein resides in the axon. It is found in the growth cone membrane. In terms of biological role, functions in cell-cell adhesion, cell migration and axon guidance, exerting an attractive or repulsive role depending on its interaction partners. Modulates cadherin-dependent cell-cell adhesion and cell sorting. Plays a role in the spatial organization of brain neurons. Plays a role in vascular development. Plays a role in cell-cell adhesion via its interaction with latrophilins that are expressed at the surface of adjacent cells. Mediates axon attraction towards cells expressing ntn1. mediates axon growth cone collapse and plays a repulsive role in neuron guidance via its interaction with unc-5 family members. Plays a role in the regulation of the density of glutamaergic synapses. Plays a role in signaling cascades downstream of fgfr1, and possibly also other fgfr family members. Plays a role in embryonic morphogenesis, but not in embryonic patterning. This Xenopus tropicalis (Western clawed frog) protein is Leucine-rich repeat transmembrane protein FLRT3.